Consider the following 442-residue polypeptide: D-inositol 3-phosphate glycosyltransferase (442 aa).

H15 serves as a coordination point for 1D-myo-inositol 3-phosphate. Residues 21 to 22 and G29 each bind UDP-N-acetyl-alpha-D-glucosamine; that span reads QP. 1D-myo-inositol 3-phosphate contacts are provided by residues 26–31, K84, Y117, T141, and R161; that span reads DAGGMN. UDP-N-acetyl-alpha-D-glucosamine-binding residues include R235, K240, and Q299. Mg(2+) contacts are provided by Y308, R309, and S311. Residues E321 and E329 each coordinate UDP-N-acetyl-alpha-D-glucosamine. T335 provides a ligand contact to Mg(2+).

It belongs to the glycosyltransferase group 1 family. MshA subfamily. Homodimer.

The catalysed reaction is 1D-myo-inositol 3-phosphate + UDP-N-acetyl-alpha-D-glucosamine = 1D-myo-inositol 2-acetamido-2-deoxy-alpha-D-glucopyranoside 3-phosphate + UDP + H(+). Functionally, catalyzes the transfer of a N-acetyl-glucosamine moiety to 1D-myo-inositol 3-phosphate to produce 1D-myo-inositol 2-acetamido-2-deoxy-glucopyranoside 3-phosphate in the mycothiol biosynthesis pathway. The sequence is that of D-inositol 3-phosphate glycosyltransferase from Rhodococcus erythropolis (strain PR4 / NBRC 100887).